A 248-amino-acid chain; its full sequence is DNA repair protein RecO (248 aa).

This sequence belongs to the RecO family.

Its function is as follows. Involved in DNA repair and RecF pathway recombination. In Bacillus mycoides (strain KBAB4) (Bacillus weihenstephanensis), this protein is DNA repair protein RecO.